Reading from the N-terminus, the 223-residue chain is Urease accessory protein UreF (223 aa).

The protein belongs to the UreF family. As to quaternary structure, ureD, UreF and UreG form a complex that acts as a GTP-hydrolysis-dependent molecular chaperone, activating the urease apoprotein by helping to assemble the nickel containing metallocenter of UreC. The UreE protein probably delivers the nickel.

Its subcellular location is the cytoplasm. Required for maturation of urease via the functional incorporation of the urease nickel metallocenter. The polypeptide is Urease accessory protein UreF (Mesorhizobium japonicum (strain LMG 29417 / CECT 9101 / MAFF 303099) (Mesorhizobium loti (strain MAFF 303099))).